A 379-amino-acid chain; its full sequence is Pre-mRNA-processing protein 45 (379 aa).

The span at 1–10 shows a compositional bias: pro residues; the sequence is MFSNRLPPPK. Disordered stretches follow at residues 1-22 and 353-379; these read MFSNRLPPPKHSQGRVSTALSS and SEGASGSHGPIQFTKAESDDKSDNYGA. Residues 368–379 show a composition bias toward basic and acidic residues; that stretch reads AESDDKSDNYGA.

Belongs to the SNW family. Belongs to the CWC complex (or CEF1-associated complex), a spliceosome sub-complex reminiscent of a late-stage spliceosome composed of the U2, U5 and U6 snRNAs and at least BUD13, BUD31, BRR2, CDC40, CEF1, CLF1, CUS1, CWC2, CWC15, CWC21, CWC22, CWC23, CWC24, CWC25, CWC27, ECM2, HSH155, IST3, ISY1, LEA1, MSL1, NTC20, PRP8, PRP9, PRP11, PRP19, PRP21, PRP22, PRP45, PRP46, SLU7, SMB1, SMD1, SMD2, SMD3, SMX2, SMX3, SNT309, SNU114, SPP2, SYF1, SYF2, RSE1 and YJU2. Interacts with CLF1, PRP22 and PRP46. Interacts with SPP382.

The protein resides in the nucleus. Functionally, involved in pre-mRNA splicing. Associated with the spliceosome throughout the splicing reactions, until after the second catalytic step. The chain is Pre-mRNA-processing protein 45 (PRP45) from Saccharomyces cerevisiae (strain ATCC 204508 / S288c) (Baker's yeast).